Reading from the N-terminus, the 103-residue chain is Cell division suppressor protein YneA (103 aa).

One can recognise a LysM domain in the interval 36 to 87; sequence VKIKVQDGDTLWSLADHVAEKKHINKEDFIEWVTENNHLQTADIKPGDELIL.

The protein belongs to the YneA family.

It is found in the cytoplasm. Functionally, inhibits cell division during the SOS response. Affects a later stage of the cell division protein assembly, after the assembly of the Z ring, by probably suppressing recruitment of FtsL and/or DivIC to the division machinery. The polypeptide is Cell division suppressor protein YneA (Bacillus velezensis (strain DSM 23117 / BGSC 10A6 / LMG 26770 / FZB42) (Bacillus amyloliquefaciens subsp. plantarum)).